Consider the following 116-residue polypeptide: Ribosome-binding factor A (116 aa).

The protein belongs to the RbfA family. As to quaternary structure, monomer. Binds 30S ribosomal subunits, but not 50S ribosomal subunits or 70S ribosomes.

The protein localises to the cytoplasm. In terms of biological role, one of several proteins that assist in the late maturation steps of the functional core of the 30S ribosomal subunit. Associates with free 30S ribosomal subunits (but not with 30S subunits that are part of 70S ribosomes or polysomes). Required for efficient processing of 16S rRNA. May interact with the 5'-terminal helix region of 16S rRNA. The sequence is that of Ribosome-binding factor A from Streptococcus pyogenes serotype M3 (strain SSI-1).